We begin with the raw amino-acid sequence, 451 residues long: Phosphoglucosamine mutase (451 aa).

The Phosphoserine intermediate role is filled by Ser-102. The Mg(2+) site is built by Ser-102, Asp-242, Asp-244, and Asp-246. The residue at position 102 (Ser-102) is a Phosphoserine.

This sequence belongs to the phosphohexose mutase family. The cofactor is Mg(2+). Post-translationally, activated by phosphorylation.

The catalysed reaction is alpha-D-glucosamine 1-phosphate = D-glucosamine 6-phosphate. Its function is as follows. Catalyzes the conversion of glucosamine-6-phosphate to glucosamine-1-phosphate. The sequence is that of Phosphoglucosamine mutase from Staphylococcus aureus (strain bovine RF122 / ET3-1).